A 538-amino-acid polypeptide reads, in one-letter code: Metal transporter Nramp5 (538 aa).

The next 12 membrane-spanning stretches (helical) occupy residues 44–64 (FLAHVGPGFMVSLAYLDPGNL), 77–97 (ELLWVILIGLIFALIIQSLAA), 118–138 (FVKIFLWLLAELAVIAADIPE), 140–160 (IGTAFAFNILFHIPVWVGVLI), 181–201 (FLISMLVFVMAACFFGELSIV), 227–247 (IALLGALVMPHNLFLHSALVL), 264–284 (FFLYESGFALFVALLINIAVV), 324–346 (SAIVYGVALLASGQSSTITGTYA), 365–385 (NLMTRTIAIAPSLIVSIIGGS), 391–411 (LIIIASMILSFELPFALIPLL), 427–447 (IYIIVFSWFLGLLIIGINMYF), and 467–487 (VLVGAAVFPFMLVYIVAVVYL). The tract at residues 518-538 (AVDDDEPLPYRDDLADIPLPR) is disordered.

Belongs to the NRAMP (TC 2.A.55) family.

The protein localises to the membrane. Its function is as follows. Probable metal transporter. This is Metal transporter Nramp5 (NRAMP5) from Oryza sativa subsp. japonica (Rice).